Consider the following 351-residue polypeptide: UPF0421 protein BC_2748 (351 aa).

4 helical membrane-spanning segments follow: residues 19-39 (IAVFLTVLVCDFFNIPTIFAV), 74-94 (FTFFLGHQAISYALAAMFTIV), 109-129 (TLTAVAMIPITANHYFTAFLI), and 131-151 (LATTSTGIIVSTLVNFFIFPP).

Belongs to the UPF0421 family.

The protein resides in the cell membrane. The sequence is that of UPF0421 protein BC_2748 from Bacillus cereus (strain ATCC 14579 / DSM 31 / CCUG 7414 / JCM 2152 / NBRC 15305 / NCIMB 9373 / NCTC 2599 / NRRL B-3711).